The following is a 314-amino-acid chain: Homoserine kinase (314 aa).

ATP is bound at residue 95–105; the sequence is PHSRGLGSSAS.

Belongs to the GHMP kinase family. Homoserine kinase subfamily.

The protein localises to the cytoplasm. The catalysed reaction is L-homoserine + ATP = O-phospho-L-homoserine + ADP + H(+). It participates in amino-acid biosynthesis; L-threonine biosynthesis; L-threonine from L-aspartate: step 4/5. Catalyzes the ATP-dependent phosphorylation of L-homoserine to L-homoserine phosphate. In Mycobacterium ulcerans (strain Agy99), this protein is Homoserine kinase.